Here is a 184-residue protein sequence, read N- to C-terminus: Protein GrpE (184 aa).

Over residues 1 to 17 (MQHEDKTPEQQENKTPE) the composition is skewed to basic and acidic residues. The tract at residues 1-39 (MQHEDKTPEQQENKTPETELQQENAPATPQEAGAAGSID) is disordered. A compositionally biased stretch (polar residues) spans 18–27 (TELQQENAPA).

It belongs to the GrpE family. As to quaternary structure, homodimer.

The protein resides in the cytoplasm. Its function is as follows. Participates actively in the response to hyperosmotic and heat shock by preventing the aggregation of stress-denatured proteins, in association with DnaK and GrpE. It is the nucleotide exchange factor for DnaK and may function as a thermosensor. Unfolded proteins bind initially to DnaJ; upon interaction with the DnaJ-bound protein, DnaK hydrolyzes its bound ATP, resulting in the formation of a stable complex. GrpE releases ADP from DnaK; ATP binding to DnaK triggers the release of the substrate protein, thus completing the reaction cycle. Several rounds of ATP-dependent interactions between DnaJ, DnaK and GrpE are required for fully efficient folding. In Methylobacillus flagellatus (strain ATCC 51484 / DSM 6875 / VKM B-1610 / KT), this protein is Protein GrpE.